The chain runs to 389 residues: Transaldolase (389 aa).

Catalysis depends on K136, which acts as the Schiff-base intermediate with substrate. EF-hand domains are found at residues 330–365 and 365–388; these read ALNQ…FDAI and IDLN…VSKL. 9 residues coordinate Ca(2+): D343, D345, D347, E354, D366, N368, D370, K372, and E377.

This sequence belongs to the transaldolase family. Type 1 subfamily.

The protein resides in the cytoplasm. The enzyme catalyses D-sedoheptulose 7-phosphate + D-glyceraldehyde 3-phosphate = D-erythrose 4-phosphate + beta-D-fructose 6-phosphate. Its pathway is carbohydrate degradation; pentose phosphate pathway; D-glyceraldehyde 3-phosphate and beta-D-fructose 6-phosphate from D-ribose 5-phosphate and D-xylulose 5-phosphate (non-oxidative stage): step 2/3. In terms of biological role, transaldolase is important for the balance of metabolites in the pentose-phosphate pathway. This chain is Transaldolase, found in Gloeobacter violaceus (strain ATCC 29082 / PCC 7421).